Here is a 341-residue protein sequence, read N- to C-terminus: S-adenosylmethionine:tRNA ribosyltransferase-isomerase (341 aa).

Belongs to the QueA family. As to quaternary structure, monomer.

Its subcellular location is the cytoplasm. It carries out the reaction 7-aminomethyl-7-carbaguanosine(34) in tRNA + S-adenosyl-L-methionine = epoxyqueuosine(34) in tRNA + adenine + L-methionine + 2 H(+). The protein operates within tRNA modification; tRNA-queuosine biosynthesis. Its function is as follows. Transfers and isomerizes the ribose moiety from AdoMet to the 7-aminomethyl group of 7-deazaguanine (preQ1-tRNA) to give epoxyqueuosine (oQ-tRNA). The chain is S-adenosylmethionine:tRNA ribosyltransferase-isomerase from Clostridium perfringens (strain ATCC 13124 / DSM 756 / JCM 1290 / NCIMB 6125 / NCTC 8237 / Type A).